The primary structure comprises 462 residues: MPLRPRLLLLCLWGLLLQQAETDSEGQTTGELYQRWERYARECEETLTAADPPSGMVCNGSFDMYVCWDYTAANTTAQASCPWYLPWYRHVAAGYVFRQCGSDGQWGPWRDHTQCENPEKNGAFQDQRLILERLQVVYTVGYSLSLGTLLLALLILSLFRRLHCTRNYIHMNVFLSFMLRAVAILTRDRLLPTLGPYPGDRTLTLRNQALAACRTAQIVTQYCVGANYTWLLVEGVYLHHLLVIVGGSEKGHFRCYLLLGWGAPALFVIPWVIVRYLLENTQCWERNEVKAIWWIIRTPILITILINFFIFIRILGILVSKLRTRQMRCPDYRLRLARSTLTLVPLLGVHEVVFAPVTEEQAEGTLRFAKLAFEIFLSSFQGFLVSVLYCFINKEVQSEIRRSWRHRVLHLSLRDERPCPHAELGPQALPSRSAPREVPITGSTLPSGPLHGPGEEVLESYC.

Residues 1 to 18 (MPLRPRLLLLCLWGLLLQ) form the signal peptide. Residues 19-135 (QAETDSEGQT…DQRLILERLQ (117 aa)) are Extracellular-facing. 3 cysteine pairs are disulfide-bonded: C43–C67, C58–C100, and C81–C115. Residues N59 and N74 are each glycosylated (N-linked (GlcNAc...) asparagine). Residues 136–158 (VVYTVGYSLSLGTLLLALLILSL) form a helical membrane-spanning segment. Topologically, residues 159–166 (FRRLHCTR) are cytoplasmic. A helical membrane pass occupies residues 167–186 (NYIHMNVFLSFMLRAVAILT). Over 187 to 214 (RDRLLPTLGPYPGDRTLTLRNQALAACR) the chain is Extracellular. A helical membrane pass occupies residues 215 to 239 (TAQIVTQYCVGANYTWLLVEGVYLH). The Cytoplasmic segment spans residues 240-251 (HLLVIVGGSEKG). Residues 252–275 (HFRCYLLLGWGAPALFVIPWVIVR) form a helical membrane-spanning segment. Residues 276 to 290 (YLLENTQCWERNEVK) are Extracellular-facing. The helical transmembrane segment at 291–316 (AIWWIIRTPILITILINFFIFIRILG) threads the bilayer. At 317 to 338 (ILVSKLRTRQMRCPDYRLRLAR) the chain is on the cytoplasmic side. The chain crosses the membrane as a helical span at residues 339-359 (STLTLVPLLGVHEVVFAPVTE). Over 360–374 (EQAEGTLRFAKLAFE) the chain is Extracellular. Residues 375 to 395 (IFLSSFQGFLVSVLYCFINKE) traverse the membrane as a helical segment. The Cytoplasmic segment spans residues 396-462 (VQSEIRRSWR…PGEEVLESYC (67 aa)). The tract at residues 421 to 462 (HAELGPQALPSRSAPREVPITGSTLPSGPLHGPGEEVLESYC) is disordered.

Belongs to the G-protein coupled receptor 2 family. As to quaternary structure, may form homodimers and heterodimers with GLP1R. Post-translationally, N-glycosylation is required for cell surface expression and lengthens receptor half-life by preventing degradation in the ER. In terms of tissue distribution, widely distributed including pancreatic islets, brain and various peripheral tissues.

It is found in the cell membrane. Its function is as follows. This is a receptor for GIP. The activity of this receptor is mediated by G proteins which activate adenylyl cyclase. This Mesocricetus auratus (Golden hamster) protein is Gastric inhibitory polypeptide receptor (GIPR).